The primary structure comprises 416 residues: Multifunctional CCA protein (416 aa).

Residues glycine 8 and arginine 11 each contribute to the ATP site. CTP-binding residues include glycine 8 and arginine 11. 2 residues coordinate Mg(2+): glutamate 21 and aspartate 23. ATP is bound by residues arginine 91, arginine 137, and arginine 140. Arginine 91, arginine 137, and arginine 140 together coordinate CTP. Residues 228–329 (TGIHTLMVLK…LKLFDAVDAW (102 aa)) enclose the HD domain.

It belongs to the tRNA nucleotidyltransferase/poly(A) polymerase family. Bacterial CCA-adding enzyme type 1 subfamily. Monomer. Can also form homodimers and oligomers. Requires Mg(2+) as cofactor. It depends on Ni(2+) as a cofactor.

The catalysed reaction is a tRNA precursor + 2 CTP + ATP = a tRNA with a 3' CCA end + 3 diphosphate. It carries out the reaction a tRNA with a 3' CCA end + 2 CTP + ATP = a tRNA with a 3' CCACCA end + 3 diphosphate. Catalyzes the addition and repair of the essential 3'-terminal CCA sequence in tRNAs without using a nucleic acid template. Adds these three nucleotides in the order of C, C, and A to the tRNA nucleotide-73, using CTP and ATP as substrates and producing inorganic pyrophosphate. tRNA 3'-terminal CCA addition is required both for tRNA processing and repair. Also involved in tRNA surveillance by mediating tandem CCA addition to generate a CCACCA at the 3' terminus of unstable tRNAs. While stable tRNAs receive only 3'-terminal CCA, unstable tRNAs are marked with CCACCA and rapidly degraded. In Photorhabdus laumondii subsp. laumondii (strain DSM 15139 / CIP 105565 / TT01) (Photorhabdus luminescens subsp. laumondii), this protein is Multifunctional CCA protein.